A 275-amino-acid polypeptide reads, in one-letter code: Protein rolling stone (275 aa).

Helical transmembrane passes span 45-65 (LLYRWIWALFFLGVYIMCVIV), 72-92 (FFIYMTNWGFGLCTITMLISA), 127-147 (WLYNMTLSLALIISTVYWVFL), 162-182 (IITHGMNSVMMLIDFLVIAFP), 185-205 (ILHMVYGMSLAIFFFLFTLIY), and 232-252 (MVTFVGIFLLIMCYWVLLFGL).

In terms of tissue distribution, expressed in cells of the somatic mesoderm, most notably the muscle founder cells, between embryonic stages 12 and 14, in growing muscle fibers in dorsal, lateral and ventral positions. At stage 16 strongest expression is in some ventral muscles and muscle 8. At stages 16/17 expression is restricted to some cells of the CNS, the brain and the gonads.

The protein resides in the membrane. In terms of biological role, may have a central role in the fusion process during myogenesis, within the somatic mesoderm. In Drosophila melanogaster (Fruit fly), this protein is Protein rolling stone (rost).